Consider the following 163-residue polypeptide: Nucleotide-binding protein Mflv_5248 (163 aa).

The protein belongs to the YajQ family.

In terms of biological role, nucleotide-binding protein. This chain is Nucleotide-binding protein Mflv_5248, found in Mycolicibacterium gilvum (strain PYR-GCK) (Mycobacterium gilvum (strain PYR-GCK)).